We begin with the raw amino-acid sequence, 426 residues long: COP9 signalosome complex subunit 6 (426 aa).

An MPN domain is found at 14–155 (VLLHPLVIMQ…AGTTRKLPLF (142 aa)). The segment at 320–426 (PVRFKSQHLG…NESDESSQAS (107 aa)) is disordered. Acidic residues predominate over residues 334-347 (ADDDDYFDDEDLEN).

This sequence belongs to the peptidase M67A family. CSN6 subfamily. As to quaternary structure, component of the CSN complex, probably composed of csn-1, csn-2, csn-3, csn-4, csn-5, csn-6 and csn-7. Within the complex it probably interacts directly with csn-2 and csn-4. Interacts with rbx-1.

It localises to the cytoplasm. It is found in the nucleus. Functionally, component of the COP9 signalosome complex (CSN), a complex involved in various cellular and developmental processes. The CSN complex is an essential regulator of the ubiquitin (Ubl) conjugation pathway by mediating the deneddylation of the cullin subunits of the SCF-type E3 ligase complexes, leading to decrease the Ubl ligase activity of SCF. The CSN complex plays an essential role in embryogenesis and oogenesis and is required to regulate microtubule stability in the early embryo. Mediates mei-3/katanin targeting for degradation at the meiosis to mitosis transition via deneddylation of cul-3. The polypeptide is COP9 signalosome complex subunit 6 (csn-6) (Caenorhabditis elegans).